The following is a 139-amino-acid chain: ATP synthase epsilon chain (139 aa).

The protein belongs to the ATPase epsilon chain family. In terms of assembly, F-type ATPases have 2 components, CF(1) - the catalytic core - and CF(0) - the membrane proton channel. CF(1) has five subunits: alpha(3), beta(3), gamma(1), delta(1), epsilon(1). CF(0) has three main subunits: a, b and c.

The protein resides in the cell membrane. Its function is as follows. Produces ATP from ADP in the presence of a proton gradient across the membrane. This Streptococcus sanguinis protein is ATP synthase epsilon chain.